The sequence spans 306 residues: Manganese transport system membrane protein MntB (306 aa).

At Met1–Arg25 the chain is on the periplasmic side. The chain crosses the membrane as a helical span at residues Ala26 to Leu46. Over Lys47–Gly48 the chain is Cytoplasmic. A helical transmembrane segment spans residues Trp49–Ala69. Residues Leu70–Asn71 are Periplasmic-facing. Residues Ile72–Val92 traverse the membrane as a helical segment. Residues Lys93–Asp101 lie on the Cytoplasmic side of the membrane. Residues Ala102 to Ile122 form a helical membrane-spanning segment. The Periplasmic segment spans residues Pro123–Gln141. The chain crosses the membrane as a helical span at residues Gln142–Arg162. Residues Lys163–Gly179 lie on the Cytoplasmic side of the membrane. A helical transmembrane segment spans residues Leu180–Ala200. The Periplasmic segment spans residues Leu201–Gln202. Residues Thr203–Leu223 traverse the membrane as a helical segment. Topologically, residues Ser224–Asp228 are cytoplasmic. The helical transmembrane segment at His229–Ser249 threads the bilayer. Residues Tyr250 to Ser255 are Periplasmic-facing. The chain crosses the membrane as a helical span at residues Thr256–Pro276. Residues Lys277 to Val306 are Cytoplasmic-facing.

This sequence belongs to the ABC-3 integral membrane protein family.

It is found in the cell membrane. In terms of biological role, part of an ATP-driven transport system for manganese. This is Manganese transport system membrane protein MntB (mntB) from Synechocystis sp. (strain ATCC 27184 / PCC 6803 / Kazusa).